Consider the following 478-residue polypeptide: MTLSFVTRWRDELPETYTALSPTPLNNARLIWHNTELANTLSIPSSLFKNGAGVWGGEALLPGMSPLAQVYSGHQFGVWAGQLGDGRGILLGEQLLADGTTMDWHLKGAGLTPYSRMGDGRAVLRSTIRESLASEAMHYLGIPTTRALSIVTSDSPVYRETAEPGAMLMRVAPSHLRFGHFEHFYYRRESEKVRQLADFAIRHYWSHLEDDEDKYRLWFSDVVARTASLIAQWQTVGFAHGVMNTDNMSLLGLTLDYGPFGFLDDYEPGFICNHSDHQGRYSFDNQPAVALWNLQRLAQTLSPFVAVDALNEALDSYQQVLLTHYGERMRQKLGFMTEQKEDNALLNELFSLMARERSDYTRTFRMLSLTEQHSAASPLRDEFIDRAAFDDWFARYRGRLQQDEVSDSERQQLMQSVNPALVLRNWLAQRAIEAAEKGDMTELHRLHEALRNPFSDRDDDYVSRPPDWGKRLEVSCSS.

The ATP site is built by glycine 84, glycine 86, arginine 87, lysine 107, aspartate 119, glycine 120, arginine 170, and arginine 177. Aspartate 246 acts as the Proton acceptor in catalysis. Mg(2+)-binding residues include asparagine 247 and aspartate 256. ATP is bound at residue aspartate 256.

It belongs to the SELO family. It depends on Mg(2+) as a cofactor. Requires Mn(2+) as cofactor.

The catalysed reaction is L-seryl-[protein] + ATP = 3-O-(5'-adenylyl)-L-seryl-[protein] + diphosphate. The enzyme catalyses L-threonyl-[protein] + ATP = 3-O-(5'-adenylyl)-L-threonyl-[protein] + diphosphate. It catalyses the reaction L-tyrosyl-[protein] + ATP = O-(5'-adenylyl)-L-tyrosyl-[protein] + diphosphate. It carries out the reaction L-histidyl-[protein] + UTP = N(tele)-(5'-uridylyl)-L-histidyl-[protein] + diphosphate. The catalysed reaction is L-seryl-[protein] + UTP = O-(5'-uridylyl)-L-seryl-[protein] + diphosphate. The enzyme catalyses L-tyrosyl-[protein] + UTP = O-(5'-uridylyl)-L-tyrosyl-[protein] + diphosphate. Its function is as follows. Nucleotidyltransferase involved in the post-translational modification of proteins. It can catalyze the addition of adenosine monophosphate (AMP) or uridine monophosphate (UMP) to a protein, resulting in modifications known as AMPylation and UMPylation. This chain is Protein nucleotidyltransferase YdiU, found in Escherichia coli O9:H4 (strain HS).